The following is a 340-amino-acid chain: NADH-quinone oxidoreductase subunit H (340 aa).

Helical transmembrane passes span 4–24 (TIGI…PLLI), 78–98 (YLFV…WAVI), 113–133 (VLYL…AGWA), 151–171 (VSYE…AGSM), 184–204 (MLHW…ISGI), 244–264 (SMIL…LSPF), 273–293 (IFFI…FLFV), and 316–336 (VLIP…VAHV).

Belongs to the complex I subunit 1 family. In terms of assembly, NDH-1 is composed of 14 different subunits. Subunits NuoA, H, J, K, L, M, N constitute the membrane sector of the complex.

It localises to the cell inner membrane. It carries out the reaction a quinone + NADH + 5 H(+)(in) = a quinol + NAD(+) + 4 H(+)(out). Functionally, NDH-1 shuttles electrons from NADH, via FMN and iron-sulfur (Fe-S) centers, to quinones in the respiratory chain. The immediate electron acceptor for the enzyme in this species is believed to be ubiquinone. Couples the redox reaction to proton translocation (for every two electrons transferred, four hydrogen ions are translocated across the cytoplasmic membrane), and thus conserves the redox energy in a proton gradient. This subunit may bind ubiquinone. This is NADH-quinone oxidoreductase subunit H from Legionella pneumophila subsp. pneumophila (strain Philadelphia 1 / ATCC 33152 / DSM 7513).